Reading from the N-terminus, the 342-residue chain is Ribosomal RNA small subunit methyltransferase C (342 aa).

It belongs to the methyltransferase superfamily. RsmC family. As to quaternary structure, monomer.

The protein localises to the cytoplasm. It carries out the reaction guanosine(1207) in 16S rRNA + S-adenosyl-L-methionine = N(2)-methylguanosine(1207) in 16S rRNA + S-adenosyl-L-homocysteine + H(+). Specifically methylates the guanine in position 1207 of 16S rRNA in the 30S particle. In Salmonella arizonae (strain ATCC BAA-731 / CDC346-86 / RSK2980), this protein is Ribosomal RNA small subunit methyltransferase C.